A 167-amino-acid chain; its full sequence is Fluoride-specific ion channel FluC (167 aa).

Transmembrane regions (helical) follow at residues 32 to 52 (HVTP…GALA), 69 to 89 (IGTL…IAYV), 102 to 122 (FMIT…AELF), and 137 to 157 (LGLH…TIGL). Positions 109 and 112 each coordinate Na(+).

This sequence belongs to the fluoride channel Fluc/FEX (TC 1.A.43) family.

The protein resides in the cell inner membrane. The enzyme catalyses fluoride(in) = fluoride(out). With respect to regulation, na(+) is not transported, but it plays an essential structural role and its presence is essential for fluoride channel function. Functionally, fluoride-specific ion channel. Important for reducing fluoride concentration in the cell, thus reducing its toxicity. This chain is Fluoride-specific ion channel FluC, found in Xanthomonas oryzae pv. oryzae (strain KACC10331 / KXO85).